The chain runs to 292 residues: Nitrogenase iron protein (292 aa).

8-15 (GKGGIGKS) lines the ATP pocket. [4Fe-4S] cluster is bound at residue cysteine 96. At arginine 99 the chain carries ADP-ribosylarginine; by dinitrogenase reductase ADP-ribosyltransferase. Residue cysteine 130 participates in [4Fe-4S] cluster binding.

It belongs to the NifH/BchL/ChlL family. As to quaternary structure, homodimer. It depends on [4Fe-4S] cluster as a cofactor. Post-translationally, the reversible ADP-ribosylation of Arg-99 inactivates the nitrogenase reductase and regulates nitrogenase activity.

It carries out the reaction N2 + 8 reduced [2Fe-2S]-[ferredoxin] + 16 ATP + 16 H2O = H2 + 8 oxidized [2Fe-2S]-[ferredoxin] + 2 NH4(+) + 16 ADP + 16 phosphate + 6 H(+). In terms of biological role, the key enzymatic reactions in nitrogen fixation are catalyzed by the nitrogenase complex, which has 2 components: the iron protein and the molybdenum-iron protein. The polypeptide is Nitrogenase iron protein (Synechococcus sp. (strain JA-3-3Ab) (Cyanobacteria bacterium Yellowstone A-Prime)).